The following is a 530-amino-acid chain: Arginine--tRNA ligase (530 aa).

The 'HIGH' region motif lies at 113–123 (ANPTGPLHIGH).

It belongs to the class-I aminoacyl-tRNA synthetase family. As to quaternary structure, monomer.

The protein localises to the cytoplasm. The catalysed reaction is tRNA(Arg) + L-arginine + ATP = L-arginyl-tRNA(Arg) + AMP + diphosphate. The chain is Arginine--tRNA ligase from Campylobacter jejuni subsp. doylei (strain ATCC BAA-1458 / RM4099 / 269.97).